A 386-amino-acid polypeptide reads, in one-letter code: Probable serine/threonine-protein kinase PBL23 (386 aa).

Cysteine 5 carries S-palmitoyl cysteine lipidation. A Protein kinase domain is found at 82–360 (FNPDNQLGEG…SDVVTALEYL (279 aa)). ATP contacts are provided by residues 88 to 96 (LGEGGFGRV) and lysine 111. The active-site Proton acceptor is the aspartate 210. The segment at 365–386 (TEEDGQTVEGEEEEEEDERSKL) is disordered. Over residues 368 to 386 (DGQTVEGEEEEEEDERSKL) the composition is skewed to acidic residues.

Belongs to the protein kinase superfamily. Ser/Thr protein kinase family.

The protein resides in the cell membrane. The enzyme catalyses L-seryl-[protein] + ATP = O-phospho-L-seryl-[protein] + ADP + H(+). The catalysed reaction is L-threonyl-[protein] + ATP = O-phospho-L-threonyl-[protein] + ADP + H(+). May be involved in plant defense signaling. The polypeptide is Probable serine/threonine-protein kinase PBL23 (Arabidopsis thaliana (Mouse-ear cress)).